The chain runs to 762 residues: N,N-dimethylformamidase beta subunit (762 aa).

As to quaternary structure, heterotetramer of two DmfA1 (alpha) and two DmfA2 (beta) subunits.

The catalysed reaction is N,N-dimethylformamide + H2O = dimethylamine + formate. Activity is slightly inhibited by Mg(2+) and Mn(2+), and slightly increased by Cu(2+). Activity is slightly inhibited by the chelating agents 8-hydroxyquinoline, ethylenediaminetetraacetate, o-phenanthroline and 2,2'-bipyridyl. Its function is as follows. Hydrolyzes N,N-dimethylformamide, and to a lesser extent N,N-dimethylacetamide and N,N-diethylacetamide. Has no activity against the substituted amides N-methylformamide, N-ethylformamide, N-ethylformamide and N-methylacetamide or the unsubstituted amides formamide, nicotinamide, acetoamide, benzamide, acetamide and acrylamide. This chain is N,N-dimethylformamidase beta subunit, found in Alcaligenes sp.